The following is a 118-amino-acid chain: Eukaryotic translation initiation factor 4E-binding protein 1 (118 aa).

Polar residues-rich tracts occupy residues 1-12 (MSGGSSCSQTPS) and 34-48 (YSTTPGGTLFSTTPG). Disordered stretches follow at residues 1-20 (MSGGSSCSQTPSRAIPATRR) and 25-48 (DGVQLPPGDYSTTPGGTLFSTTPG). Position 2 is an N-acetylserine (Ser2). At Thr37 the chain carries Phosphothreonine; by MTOR. Thr41 is subject to Phosphothreonine. Ser44 is modified (phosphoserine). The residue at position 46 (Thr46) is a Phosphothreonine; by MTOR. Thr50 is modified (phosphothreonine). Tyr54 carries the phosphotyrosine modification. Residues 54–60 (YDRKFLM) carry the YXXXXLphi motif motif. Lys57 is covalently cross-linked (Glycyl lysine isopeptide (Lys-Gly) (interchain with G-Cter in ubiquitin)). The segment at 64 to 118 (NSPVTKTPPRDLPTIPGVTSPSSDEPPMEASQSHLRNSPEDKRAGGEESQFEMDI) is disordered. At Ser65 the chain carries Phosphoserine; by DYRK2, MAPK1, MAPK3 and MTOR. A Phosphothreonine; by MTOR modification is found at Thr70. Residue Thr77 is modified to Phosphothreonine. Phosphoserine is present on residues Ser83 and Ser96. The segment covering 100-109 (NSPEDKRAGG) has biased composition (basic and acidic residues). Ser101 carries the post-translational modification Phosphoserine; by DYRK2. Ser112 carries the phosphoserine modification. The short motif at 114–118 (FEMDI) is the TOS motif element.

Belongs to the eIF4E-binding protein family. Hypophosphorylated EIF4EBP1 competes with EIF4G1/EIF4G3 to interact with EIF4E; insulin stimulated MAP-kinase (MAPK1 and MAPK3) or mTORC1 phosphorylation of EIF4EBP1 causes dissociation of the complex allowing EIF4G1/EIF4G3 to bind and consequent initiation of translation. Interacts (via TOS motif) with RPTOR; promoting phosphorylation by mTORC1. In terms of processing, phosphorylated on serine and threonine residues in response to insulin, EGF and PDGF. Phosphorylation at Thr-37, Thr-46, Ser-65 and Thr-70, corresponding to the hyperphosphorylated form, is regulated by mTORC1 and abolishes binding to EIF4E. Ubiquitinated: when eIF4E levels are low, hypophosphorylated form is ubiquitinated by the BCR(KLHL25) complex, leading to its degradation and serving as a homeostatic mechanism to maintain translation and prevent eIF4E inhibition when eIF4E levels are low. Not ubiquitinated when hyperphosphorylated (at Thr-37, Thr-46, Ser-65 and Thr-70) or associated with eIF4E.

It is found in the cytoplasm. The protein localises to the nucleus. Functionally, repressor of translation initiation that regulates EIF4E activity by preventing its assembly into the eIF4F complex: hypophosphorylated form competes with EIF4G1/EIF4G3 and strongly binds to EIF4E, leading to repress translation. In contrast, hyperphosphorylated form dissociates from EIF4E, allowing interaction between EIF4G1/EIF4G3 and EIF4E, leading to initiation of translation. Mediates the regulation of protein translation by hormones, growth factors and other stimuli that signal through the MAP kinase and mTORC1 pathways. This chain is Eukaryotic translation initiation factor 4E-binding protein 1 (EIF4EBP1), found in Homo sapiens (Human).